The sequence spans 90 residues: Molybdopterin synthase sulfur carrier subunit (90 aa).

Gly-90 is modified (1-thioglycine; alternate). The residue at position 90 (Gly-90) is a Glycyl adenylate; alternate.

Belongs to the MoaD family. MOCS2A subfamily. In terms of assembly, heterotetramer; composed of 2 small (Mocs2A) and 2 large (Mocs2B) subunits. Post-translationally, C-terminal thiocarboxylation occurs in 2 steps, it is first acyl-adenylated (-COAMP) via the hesA/moeB/thiF part of MOCS3, then thiocarboxylated (-COSH) via the rhodanese domain of MOCS3.

The protein localises to the cytoplasm. The protein operates within cofactor biosynthesis; molybdopterin biosynthesis. Functionally, acts as a sulfur carrier required for molybdopterin biosynthesis. Component of the molybdopterin synthase complex that catalyzes the conversion of precursor Z into molybdopterin by mediating the incorporation of 2 sulfur atoms into precursor Z to generate a dithiolene group. In the complex, serves as sulfur donor by being thiocarboxylated (-COSH) at its C-terminus by MOCS3. After interaction with Mocs2B, the sulfur is then transferred to precursor Z to form molybdopterin. This Drosophila simulans (Fruit fly) protein is Molybdopterin synthase sulfur carrier subunit.